The sequence spans 383 residues: S-(hydroxymethyl)glutathione dehydrogenase (383 aa).

C51 provides a ligand contact to Zn(2+). H52 serves as a coordination point for NAD(+). 7 residues coordinate Zn(2+): H73, E74, C103, C106, C109, C117, and C180. NAD(+) is bound by residues 205 to 210 (GAGCVG), D229, and 298 to 300 (IGV).

The protein belongs to the zinc-containing alcohol dehydrogenase family. Class-III subfamily. Zn(2+) is required as a cofactor.

It carries out the reaction a primary alcohol + NAD(+) = an aldehyde + NADH + H(+). The catalysed reaction is a secondary alcohol + NAD(+) = a ketone + NADH + H(+). It catalyses the reaction S-(hydroxymethyl)glutathione + NADP(+) = S-formylglutathione + NADPH + H(+). The enzyme catalyses S-(hydroxymethyl)glutathione + NAD(+) = S-formylglutathione + NADH + H(+). It carries out the reaction S-nitrosoglutathione + NADH + H(+) = S-(hydroxysulfenamide)glutathione + NAD(+). In terms of biological role, oxidizes long-chain alcohols and, in the presence of glutathione, is able to oxidize formaldehyde. Also acts as a S-nitroso-glutathione reductase by catalyzing the NADH-dependent reduction of S-nitrosoglutathione, thereby regulating protein S-nitrosylation. In Aspergillus oryzae (strain ATCC 42149 / RIB 40) (Yellow koji mold), this protein is S-(hydroxymethyl)glutathione dehydrogenase (FDH1).